The primary structure comprises 288 residues: Energy-coupling factor transporter ATP-binding protein EcfA2 (288 aa).

The ABC transporter domain maps to 3–245 (IIVKNLTHIY…NASKLKDIGL (243 aa)). 40–47 (GHTGSGKS) serves as a coordination point for ATP.

Belongs to the ABC transporter superfamily. Energy-coupling factor EcfA family. As to quaternary structure, forms a stable energy-coupling factor (ECF) transporter complex composed of 2 membrane-embedded substrate-binding proteins (S component), 2 ATP-binding proteins (A component) and 2 transmembrane proteins (T component).

Its subcellular location is the cell membrane. Its function is as follows. ATP-binding (A) component of a common energy-coupling factor (ECF) ABC-transporter complex. Unlike classic ABC transporters this ECF transporter provides the energy necessary to transport a number of different substrates. The protein is Energy-coupling factor transporter ATP-binding protein EcfA2 of Clostridioides difficile (strain 630) (Peptoclostridium difficile).